A 130-amino-acid chain; its full sequence is Small ribosomal subunit protein uS9 (130 aa).

It belongs to the universal ribosomal protein uS9 family.

This chain is Small ribosomal subunit protein uS9, found in Methylococcus capsulatus (strain ATCC 33009 / NCIMB 11132 / Bath).